A 322-amino-acid chain; its full sequence is Fructose-1,6-bisphosphatase class 1 (322 aa).

Positions 84, 103, 105, and 106 each coordinate Mg(2+). Residues Asp106–Ser109, Asn198, and Lys264 contribute to the substrate site. Glu270 lines the Mg(2+) pocket.

This sequence belongs to the FBPase class 1 family. As to quaternary structure, homotetramer. Mg(2+) serves as cofactor.

The protein localises to the cytoplasm. It carries out the reaction beta-D-fructose 1,6-bisphosphate + H2O = beta-D-fructose 6-phosphate + phosphate. It participates in carbohydrate biosynthesis; gluconeogenesis. This chain is Fructose-1,6-bisphosphatase class 1, found in Saccharophagus degradans (strain 2-40 / ATCC 43961 / DSM 17024).